The following is a 307-amino-acid chain: Probable deoxyhypusine synthase (307 aa).

Lys278 serves as the catalytic Nucleophile.

The protein belongs to the deoxyhypusine synthase family. Requires NAD(+) as cofactor.

The catalysed reaction is [eIF5A protein]-L-lysine + spermidine = [eIF5A protein]-deoxyhypusine + propane-1,3-diamine. Its pathway is protein modification; eIF5A hypusination. Its function is as follows. Catalyzes the NAD-dependent oxidative cleavage of spermidine and the subsequent transfer of the butylamine moiety of spermidine to the epsilon-amino group of a specific lysine residue of the eIF-5A precursor protein to form the intermediate deoxyhypusine residue. This is Probable deoxyhypusine synthase (dys) from Methanothermobacter thermautotrophicus (strain ATCC 29096 / DSM 1053 / JCM 10044 / NBRC 100330 / Delta H) (Methanobacterium thermoautotrophicum).